Reading from the N-terminus, the 372-residue chain is Lung adenoma susceptibility protein 2 (372 aa).

The N-terminal stretch at 1-31 (MAKSKTKHRLCSQESSVSALLASCTLSGSNS) is a signal peptide. At Ser161 the chain carries Phosphoserine. The disordered stretch occupies residues 248-268 (KSPVPVNSDDSPQQTSRAKSA). Over residues 255–265 (SDDSPQQTSRA) the composition is skewed to polar residues.

The protein resides in the secreted. Its function is as follows. Might play a role in cell proliferation. The chain is Lung adenoma susceptibility protein 2 (LAS2) from Homo sapiens (Human).